Consider the following 302-residue polypeptide: 4-hydroxy-tetrahydrodipicolinate synthase (302 aa).

Thr46 serves as a coordination point for pyruvate. Tyr135 functions as the Proton donor/acceptor in the catalytic mechanism. Residue Lys164 is the Schiff-base intermediate with substrate of the active site. Val206 is a binding site for pyruvate.

It belongs to the DapA family. Homotetramer; dimer of dimers.

The protein localises to the cytoplasm. It carries out the reaction L-aspartate 4-semialdehyde + pyruvate = (2S,4S)-4-hydroxy-2,3,4,5-tetrahydrodipicolinate + H2O + H(+). Its pathway is amino-acid biosynthesis; L-lysine biosynthesis via DAP pathway; (S)-tetrahydrodipicolinate from L-aspartate: step 3/4. Its function is as follows. Catalyzes the condensation of (S)-aspartate-beta-semialdehyde [(S)-ASA] and pyruvate to 4-hydroxy-tetrahydrodipicolinate (HTPA). The sequence is that of 4-hydroxy-tetrahydrodipicolinate synthase from Acidobacterium capsulatum (strain ATCC 51196 / DSM 11244 / BCRC 80197 / JCM 7670 / NBRC 15755 / NCIMB 13165 / 161).